The primary structure comprises 943 residues: Glutamate receptor ionotropic, NMDA 1 (943 aa).

The N-terminal stretch at 1 to 20 is a signal peptide; the sequence is MSTMRLLTLALLFSCSFARA. The Extracellular segment spans residues 21-580; sequence ACDPKIVNIG…TLDSFMQPFQ (560 aa). N-linked (GlcNAc...) asparagine glycosylation is found at asparagine 61, asparagine 224, asparagine 260, asparagine 297, asparagine 321, asparagine 371, asparagine 389, asparagine 461, asparagine 492, and asparagine 512. A disulfide bond links cysteine 79 and cysteine 329. Disulfide bonds link cysteine 441–cysteine 475 and cysteine 457–cysteine 476. Glycine contacts are provided by proline 537, threonine 539, and arginine 544. A helical membrane pass occupies residues 581–601; sequence STLWLLVGLSVHVVAVMLYLL. The Cytoplasmic portion of the chain corresponds to 602-623; that stretch reads DRFSPFGRFKVNSEEEEEDALT. The segment at residues 624–645 is an intramembrane region (discontinuously helical); it reads LSSAMWFSWGVLLNSGIGEGAP. The segment at 624–645 is pore-forming; the sequence is LSSAMWFSWGVLLNSGIGEGAP. The Cytoplasmic portion of the chain corresponds to 646-651; that stretch reads RSFSAR. Residues 652–668 traverse the membrane as a helical segment; it reads ILGMVWAGFAMIIVASY. The Extracellular segment spans residues 669-833; it reads TANLAAFLVL…NAPATLTFEN (165 aa). A glycan (N-linked (GlcNAc...) asparagine) is linked at asparagine 695. Glycine-binding residues include serine 709 and aspartate 753. A disulfide bond links cysteine 765 and cysteine 819. Asparagine 792 carries an N-linked (GlcNAc...) asparagine glycan. A helical transmembrane segment spans residues 834-854; the sequence is MAGVFMLVAGGIVAGIFLIFI. The Cytoplasmic portion of the chain corresponds to 855–943; sequence EIAYKRHKDA…LSDPSVSTVV (89 aa). Serine 910, serine 911, serine 917, and serine 918 each carry phosphoserine.

This sequence belongs to the glutamate-gated ion channel (TC 1.A.10.1) family. NR1/GRIN1 subfamily. In terms of assembly, heterotetramer; the NMDAR subunits are modular and harbor tiered domains that function in concert to regulate opening and closing of the cation-selective ion channel pore. Forms heterotetrameric channels composed of two GluN1/zeta subunits (GRIN1), and two identical GluN2/epsilon subunits (GRIN2A, GRIN2B, GRIN2C or GRIN2D) or GluN3 subunits (GRIN3A or GRIN3B) (in vitro). Can also form heterotetrameric channels that contain at least two GluN1 subunits and at least two different GluN2 subunits (or a combination of one GluN2 and one GluN3 subunits) (in vitro). In vivo, the subunit composition may vary in function of the expression levels of the different subunits. Found in a complex with GRIN2A or GRIN2B, GRIN3A and PPP2CB. Found in a complex with GRIN2A or GRIN2B and GRIN3B. Interacts with SNX27 (via PDZ domain); the interaction is required for recycling to the plasma membrane when endocytosed and prevent degradation in lysosomes. Interacts with DLG4 and MPDZ. Interacts with LRFN1 and LRFN2. Interacts with MYZAP. Found in a complex with DLG4 and PRR7. Found in a complex with GRIN2B and PRR7. Interacts with PRR7; the interaction is reduced following NMDA receptor activity. Post-translationally, NMDA is probably regulated by C-terminal phosphorylation of an isoform of GRIN1 by PKC. Dephosphorylated on Ser-897 probably by protein phosphatase 2A (PPP2CB). Its phosphorylated state is influenced by the formation of the NMDAR-PPP2CB complex and the NMDAR channel activity.

It localises to the cell membrane. The protein resides in the postsynaptic cell membrane. Its subcellular location is the postsynaptic density membrane. It is found in the synaptic cell membrane. The catalysed reaction is Ca(2+)(in) = Ca(2+)(out). It catalyses the reaction Na(+)(in) = Na(+)(out). The enzyme catalyses K(+)(in) = K(+)(out). Its function is as follows. Component of N-methyl-D-aspartate (NMDA) receptors (NMDARs) that function as heterotetrameric, ligand-gated cation channels with high calcium permeability and voltage-dependent block by Mg(2+). NMDARs participate in synaptic plasticity for learning and memory formation by contributing to the long-term potentiation (LTP). Channel activation requires binding of the neurotransmitter L-glutamate to the GluN2 subunit, glycine or D-serine binding to the GluN1 subunit, plus membrane depolarization to eliminate channel inhibition by Mg(2+). NMDARs mediate simultaneously the potasium efflux and the influx of calcium and sodium. Each GluN2 or GluN3 subunit confers differential attributes to channel properties, including activation, deactivation and desensitization kinetics, pH sensitivity, Ca2(+) permeability, and binding to allosteric modulators. The GluN3 subunits confer distinctive ion channel activation mechanism, which relies exclusively on glycine and does not involve glutamate. This is Glutamate receptor ionotropic, NMDA 1 from Canis lupus familiaris (Dog).